Consider the following 74-residue polypeptide: MYKKMLKKAIKNADRHYEDACNLPYETVDESKIQWTELKEKDLKRIEEEKKIIETINQIQKKYIHTVQQQNTNI.

This is an uncharacterized protein from Invertebrate iridescent virus 6 (IIV-6).